Consider the following 320-residue polypeptide: Cytochrome f (320 aa).

An N-terminal signal peptide occupies residues 1-35 (MQTRNTFSSIKEEITRSISVSLMIYIITWAPVSNA). Residues tyrosine 36, cysteine 56, cysteine 59, and histidine 60 each contribute to the heme site. The chain crosses the membrane as a helical span at residues 286 to 306 (VQGLLFFFASVILAQIFLVLK).

The protein belongs to the cytochrome f family. As to quaternary structure, the 4 large subunits of the cytochrome b6-f complex are cytochrome b6, subunit IV (17 kDa polypeptide, petD), cytochrome f and the Rieske protein, while the 4 small subunits are PetG, PetL, PetM and PetN. The complex functions as a dimer. The cofactor is heme.

The protein resides in the plastid. It localises to the chloroplast thylakoid membrane. Its function is as follows. Component of the cytochrome b6-f complex, which mediates electron transfer between photosystem II (PSII) and photosystem I (PSI), cyclic electron flow around PSI, and state transitions. The sequence is that of Cytochrome f from Cucumis sativus (Cucumber).